Consider the following 226-residue polypeptide: 2-C-methyl-D-erythritol 4-phosphate cytidylyltransferase (226 aa).

This sequence belongs to the IspD/TarI cytidylyltransferase family. IspD subfamily.

The enzyme catalyses 2-C-methyl-D-erythritol 4-phosphate + CTP + H(+) = 4-CDP-2-C-methyl-D-erythritol + diphosphate. Its pathway is isoprenoid biosynthesis; isopentenyl diphosphate biosynthesis via DXP pathway; isopentenyl diphosphate from 1-deoxy-D-xylulose 5-phosphate: step 2/6. Its function is as follows. Catalyzes the formation of 4-diphosphocytidyl-2-C-methyl-D-erythritol from CTP and 2-C-methyl-D-erythritol 4-phosphate (MEP). This chain is 2-C-methyl-D-erythritol 4-phosphate cytidylyltransferase, found in Microcystis aeruginosa (strain NIES-843 / IAM M-2473).